A 1433-amino-acid polypeptide reads, in one-letter code: Bacillopeptidase F (1433 aa).

The signal sequence occupies residues Met-1–Ala-30. A propeptide spanning residues Ser-31–Lys-194 is cleaved from the precursor. Positions Thr-68–Leu-177 constitute an Inhibitor I9 domain. Residues Glu-200–Val-512 form the Peptidase S8 domain. Residues Asp-227, His-274, and Ser-452 each act as charge relay system in the active site. A propeptide spanning residues Ser-756–Asn-1433 is cleaved from the precursor. The segment at Lys-800 to His-830 is disordered. The span at Gly-808–Lys-821 shows a compositional bias: basic residues.

This sequence belongs to the peptidase S8 family.

Its subcellular location is the secreted. The protein is Bacillopeptidase F (bpr) of Bacillus subtilis (strain 168).